Consider the following 281-residue polypeptide: 4-diphosphocytidyl-2-C-methyl-D-erythritol kinase (281 aa).

K11 is an active-site residue. 92 to 102 (LVSAGLAGGSA) serves as a coordination point for ATP. The active site involves D132.

It belongs to the GHMP kinase family. IspE subfamily.

It carries out the reaction 4-CDP-2-C-methyl-D-erythritol + ATP = 4-CDP-2-C-methyl-D-erythritol 2-phosphate + ADP + H(+). Its pathway is isoprenoid biosynthesis; isopentenyl diphosphate biosynthesis via DXP pathway; isopentenyl diphosphate from 1-deoxy-D-xylulose 5-phosphate: step 3/6. Catalyzes the phosphorylation of the position 2 hydroxy group of 4-diphosphocytidyl-2C-methyl-D-erythritol. In Ehrlichia ruminantium (strain Welgevonden), this protein is 4-diphosphocytidyl-2-C-methyl-D-erythritol kinase.